The sequence spans 227 residues: 27 kDa glycoprotein (227 aa).

Residues 1–17 form the signal peptide; sequence MMWKTVLITIFAAGVLA. 2 N-linked (GlcNAc...) asparagine glycosylation sites follow: Asn-118 and Asn-173.

It belongs to the UPF0408 family. As to expression, expressed in the subesophageal body, fat bodies, hemocytes, midgut and Malpighian tubules. Not expressed in silk glands.

The protein resides in the secreted. This is 27 kDa glycoprotein from Bombyx mori (Silk moth).